Consider the following 326-residue polypeptide: METTLGEIARIIKGELKGNHNIKIKGISTPENPKENTVVFCRNMEEVEKAKEKASAVVTQEEVKDFPHIKVKDVKLALAEFLEHFFPEEHPWGFLRTPASEKELEIGMGSFIGDFVVIGKNVKIGRNVKIYPFTYVGDNTVIGDNTVIFSGVHIYRNTVIGRNVRIHSGAVIGADGFGYHITQEGIKKIPHIGGVIIEDNVEIGANTTIDRALIENTLIGKNTKIDNLVMVAHNCKVGENNILVSQVGLSGSVKTGKNVILAGQVGVADHVEIGDNVIVTAKSGVANNLAPNKTYGANLPAIEWSRWKRIYVYLLRLPELFKKITT.

Residue H233 is the Proton acceptor of the active site.

The protein belongs to the transferase hexapeptide repeat family. LpxD subfamily. Homotrimer.

It carries out the reaction a UDP-3-O-[(3R)-3-hydroxyacyl]-alpha-D-glucosamine + a (3R)-hydroxyacyl-[ACP] = a UDP-2-N,3-O-bis[(3R)-3-hydroxyacyl]-alpha-D-glucosamine + holo-[ACP] + H(+). It functions in the pathway bacterial outer membrane biogenesis; LPS lipid A biosynthesis. Functionally, catalyzes the N-acylation of UDP-3-O-acylglucosamine using 3-hydroxyacyl-ACP as the acyl donor. Is involved in the biosynthesis of lipid A, a phosphorylated glycolipid that anchors the lipopolysaccharide to the outer membrane of the cell. The chain is UDP-3-O-acylglucosamine N-acyltransferase from Aquifex aeolicus (strain VF5).